We begin with the raw amino-acid sequence, 130 residues long: Gloverin (130 aa).

In terms of tissue distribution, hemolymph.

The protein resides in the secreted. Its function is as follows. Antibacterial protein active against Gram-negative bacteria. The protein is Gloverin of Hyalophora cecropia (Cecropia moth).